Consider the following 369-residue polypeptide: Chromatin modification-related protein EAF3 (369 aa).

In terms of domain architecture, Tudor-knot spans 9–97 (TVYAYHGPLI…WDEWVGIDRI (89 aa)). Disordered stretches follow at residues 43–66 (PLEE…IAKF) and 126–191 (IIVN…NKSK). Basic residues predominate over residues 53–62 (NHHHHHHSQH). The span at 126 to 135 (IIVNATTKNH) shows a compositional bias: low complexity. A compositionally biased stretch (basic residues) spans 136 to 149 (TNNKNKKESNKRKS). The segment covering 150-191 (SSATTTSGVTAGTNNNKKQKSASTSTTNNTSGNSGTTSNKSK) has biased composition (low complexity). One can recognise an MRG domain in the interval 193–368 (ILSRLNLNFP…TSPQYDSLAR (176 aa)).

The protein belongs to the MRG family. Component of the NuA4 histone acetyltransferase complex.

The protein localises to the nucleus. In terms of biological role, involved in deacetylation of histones, chromatin assembly and chromosome segregation. May act as a transcriptional oscillator, directing histone deacetylases to specific chromosomal domains. Component of the NuA4 histone acetyltransferase complex which is involved in transcriptional activation of selected genes principally by acetylation of nucleosomal histone H4 and H2A. The NuA4 complex is also involved in DNA repair. This is Chromatin modification-related protein EAF3 (EAF3) from Candida albicans (strain SC5314 / ATCC MYA-2876) (Yeast).